The primary structure comprises 431 residues: tRNA (adenine(37)-N6)-methyltransferase (431 aa).

Residues 30–168 enclose the TsaA-like domain; it reads TEPIGYLESC…YIADYDSPQN (139 aa). S-adenosyl-L-methionine is bound by residues 47–49, 90–91, arginine 117, leucine 127, and 148–151; these read PRQ, HK, and IHGT. 2 disordered regions span residues 167 to 189 and 201 to 243; these read QNLE…ATAN and KAQP…DRER. The segment covering 207–243 has biased composition (basic and acidic residues); that stretch reads STKEKPKCREHRTSDENSQKFRDTSEIQHTLPEDRER.

This sequence belongs to the tRNA methyltransferase O family.

It carries out the reaction N(6)-L-threonylcarbamoyladenosine(37) in tRNA + S-adenosyl-L-methionine = N(6)-methyl,N(6)-L-threonylcarbamoyladenosine(37) in tRNA + S-adenosyl-L-homocysteine + H(+). S-adenosyl-L-methionine-dependent methyltransferase responsible for the addition of the methyl group in the formation of N6-methyl-N6-threonylcarbamoyladenosine at position 37 (m(6)t(6)A37) of the tRNA anticodon loop of tRNA(Ser)(GCU). The methyl group of m(6)t(6)A37 may improve the efficiency of the tRNA decoding ability. May bind to tRNA. This Rattus norvegicus (Rat) protein is tRNA (adenine(37)-N6)-methyltransferase.